Here is a 351-residue protein sequence, read N- to C-terminus: Tropomodulin-2 (351 aa).

Phosphoserine is present on Ser25.

This sequence belongs to the tropomodulin family. In terms of assembly, binds to the N-terminus of tropomyosin and to actin. As to expression, neuronal-tissue specific.

The protein resides in the cytoplasm. It is found in the cytoskeleton. Its function is as follows. Blocks the elongation and depolymerization of the actin filaments at the pointed end. The Tmod/TM complex contributes to the formation of the short actin protofilament, which in turn defines the geometry of the membrane skeleton. The protein is Tropomodulin-2 (Tmod2) of Mus musculus (Mouse).